We begin with the raw amino-acid sequence, 215 residues long: Protein LURP-one-related 16 (215 aa).

Gly-2 is lipidated: N-myristoyl glycine.

It belongs to the LOR family.

Functionally, might be related to the phospholipid scramblase and tubby-like superfamily of membrane tethered transcription factors. This chain is Protein LURP-one-related 16, found in Arabidopsis thaliana (Mouse-ear cress).